The following is a 430-amino-acid chain: Signal recognition particle receptor FtsY (430 aa).

The disordered stretch occupies residues D75–H95. GTP is bound by residues G238–T245, D320–R324, and T382–D385.

Belongs to the GTP-binding SRP family. FtsY subfamily. In terms of assembly, part of the signal recognition particle protein translocation system, which is composed of SRP and FtsY.

The protein localises to the cell membrane. It is found in the cytoplasm. The enzyme catalyses GTP + H2O = GDP + phosphate + H(+). Functionally, involved in targeting and insertion of nascent membrane proteins into the cytoplasmic membrane. Acts as a receptor for the complex formed by the signal recognition particle (SRP) and the ribosome-nascent chain (RNC). This chain is Signal recognition particle receptor FtsY, found in Mycobacterium leprae (strain TN).